A 65-amino-acid polypeptide reads, in one-letter code: Large ribosomal subunit protein bL35 (65 aa).

It belongs to the bacterial ribosomal protein bL35 family.

This is Large ribosomal subunit protein bL35 from Aromatoleum aromaticum (strain DSM 19018 / LMG 30748 / EbN1) (Azoarcus sp. (strain EbN1)).